We begin with the raw amino-acid sequence, 154 residues long: Bacterial ferritin (154 aa).

The 145-residue stretch at Met1–Gly145 folds into the Ferritin-like diiron domain. 6 residues coordinate Fe cation: Glu18, Glu51, His54, Glu93, Glu127, and His130.

Belongs to the bacterioferritin family. In terms of assembly, heterooligomer of 24 subunits, arranged as 12 dimers, that are packed together to form an approximately spherical molecule with a central cavity, in which large amounts of iron can be deposited.

It carries out the reaction 4 Fe(2+) + O2 + 4 H(+) = 4 Fe(3+) + 2 H2O. It catalyses the reaction Fe(2+)(in) = Fe(2+)(out). Functionally, iron-storage protein, whose ferroxidase center binds Fe(2+), oxidizes it using dioxygen to Fe(3+), and participates in the subsequent Fe(3+) oxide mineral core formation within the central cavity of the BFR protein shell. The chain is Bacterial ferritin (bfrA) from Neisseria meningitidis serogroup A / serotype 4A (strain DSM 15465 / Z2491).